Here is a 573-residue protein sequence, read N- to C-terminus: Delta 8-(E)-sphingolipid desaturase (573 aa).

A Cytochrome b5 heme-binding domain is found at 2–77 (SRVLSRRDIA…FKIWKIGRID (76 aa)). Positions 37 and 60 each coordinate heme. A helical transmembrane segment spans residues 228–248 (LFGISFYLLSLKWFAISAICL). The short motif at 260-264 (HDAGH) is the Histidine box-1 element. A helical membrane pass occupies residues 273-293 (VDNIIGMTVASWIGGLSLGWW). A Histidine box-2 motif is present at residues 297-301 (HDVHH). Transmembrane regions (helical) follow at residues 353-372 (YLYY…LSWM), 393-413 (LAEL…KQMP), and 422-442 (VMIS…SHFA). The Histidine box-3 signature appears at 481–485 (QVIHH).

Belongs to the fatty acid desaturase type 1 family.

Its subcellular location is the membrane. It catalyses the reaction an N-acylsphing-4-enine + 2 Fe(II)-[cytochrome b5] + O2 + 2 H(+) = a (4E,8E)-4-sphinga-4,8-dienine ceramide + 2 Fe(III)-[cytochrome b5] + 2 H2O. It participates in lipid metabolism; sphingolipid metabolism. Delta(8)-fatty-acid desaturase which introduces a double bond at the 8-position in the long-chain base (LCB) of ceramides. Required for the formation of the di-unsaturated sphingoid base (E,E)-sphinga-4,8-dienine during glucosylceramide (GluCer) biosynthesis. In Kluyveromyces lactis (Yeast), this protein is Delta 8-(E)-sphingolipid desaturase.